We begin with the raw amino-acid sequence, 186 residues long: Auxin-responsive protein IAA4 (186 aa).

The EAR-like (transcriptional repression) signature appears at 18–22 (LRLGL). Residues 25–62 (TEETVSCGKSNKRVLPEATEKEIESTGKTETASPPKAQ) form a disordered region. A compositionally biased stretch (basic and acidic residues) spans 38 to 51 (VLPEATEKEIESTG). The PB1 domain occupies 88-175 (GNYVKVSMDG…SCKRLRIMKG (88 aa)).

Belongs to the Aux/IAA family. As to quaternary structure, homodimers and heterodimers. Interacts with TPL. Preferentially expressed in stems, leaves and flowers.

Its subcellular location is the nucleus. Aux/IAA proteins are short-lived transcriptional factors that function as repressors of early auxin response genes at low auxin concentrations. Repression is thought to result from the interaction with auxin response factors (ARFs), proteins that bind to the auxin-responsive promoter element (AuxRE). Formation of heterodimers with ARF proteins may alter their ability to modulate early auxin response genes expression. The protein is Auxin-responsive protein IAA4 (IAA4) of Arabidopsis thaliana (Mouse-ear cress).